Reading from the N-terminus, the 130-residue chain is Small ribosomal subunit protein uS9 (130 aa).

It belongs to the universal ribosomal protein uS9 family.

The sequence is that of Small ribosomal subunit protein uS9 from Bacillus cytotoxicus (strain DSM 22905 / CIP 110041 / 391-98 / NVH 391-98).